Here is a 369-residue protein sequence, read N- to C-terminus: S-adenosyl-L-methionine-dependent uroporphyrinogen III methyltransferase, chloroplastic (369 aa).

A chloroplast-targeting transit peptide spans M1–C28. S-adenosyl-L-homocysteine-binding positions include P124, G200–D202, T230–A231, M284, and T341.

The protein belongs to the precorrin methyltransferase family. Mostly expressed in leaves, and, to a lower extent, in stems, flowers and siliques.

It is found in the plastid. The protein resides in the chloroplast. It catalyses the reaction uroporphyrinogen III + 2 S-adenosyl-L-methionine = precorrin-2 + 2 S-adenosyl-L-homocysteine + H(+). It participates in porphyrin-containing compound metabolism; siroheme biosynthesis; precorrin-2 from uroporphyrinogen III: step 1/1. Its function is as follows. Essential protein required for siroheme biosynthesis. Catalyzes the two successive C-2 and C-7 methylation reactions involved in the conversion of uroporphyrinogen III to precorrin-2 via the intermediate formation of precorrin-1. It is a step in the biosynthesis of siroheme. Promotes nitrogen and sulfur assimilation as well as photosynthesis efficiency by triggering chlorophyll, nitrite reductase (NiR) and sulfite reductase (SiR) biosynthesis. This is S-adenosyl-L-methionine-dependent uroporphyrinogen III methyltransferase, chloroplastic from Arabidopsis thaliana (Mouse-ear cress).